The chain runs to 439 residues: Nitroalkane oxidase (439 aa).

FAD contacts are provided by residues 131–134 (LMHS), 139–141 (TAN), 169–171 (WPS), R304, 313–314 (HQ), 375–379 (KAVGM), and 400–404 (LFDGG). The Proton acceptor role is filled by D402.

The protein belongs to the acyl-CoA dehydrogenase family. Homotetramer. It depends on FAD as a cofactor.

It catalyses the reaction a primary nitroalkane + O2 + H2O = an aldehyde + nitrite + H2O2 + H(+). It carries out the reaction a secondary nitroalkane + O2 + H2O = a ketone + nitrite + H2O2 + H(+). Its activity is regulated as follows. Strongly inhibited by mercury chloride and KCN. In terms of biological role, catalyzes the oxidative denitrification of neutral nitroalkanes, including 3-nitro-2-pentanol, 1-nitropropane, 2-nitropropane, nitroethane and nitrocyclohexane, and may thereby protect the organism against toxic compounds. Has no detectable acyl-CoA dehydrogenase activity. In Fusarium oxysporum (Fusarium vascular wilt), this protein is Nitroalkane oxidase.